We begin with the raw amino-acid sequence, 246 residues long: Ribosomal RNA small subunit methyltransferase G (246 aa).

Residues Gly-81, Phe-86, Ala-137–Glu-138, and Arg-156 contribute to the S-adenosyl-L-methionine site. Positions Leu-221–Leu-246 are disordered.

Belongs to the methyltransferase superfamily. RNA methyltransferase RsmG family.

It localises to the cytoplasm. Its function is as follows. Specifically methylates the N7 position of a guanine in 16S rRNA. This Symbiobacterium thermophilum (strain DSM 24528 / JCM 14929 / IAM 14863 / T) protein is Ribosomal RNA small subunit methyltransferase G.